The chain runs to 163 residues: Globin CTT-V (163 aa).

An N-terminal signal peptide occupies residues 1–16; the sequence is MKFFAVLTLCIIGAIA. The Globin domain occupies 18 to 163; that stretch reads PLTSDEANLV…YTVAFEVIPA (146 aa). Heme b-binding residues include histidine 76 and histidine 111.

Belongs to the globin family.

The chain is Globin CTT-V (CTT-V) from Chironomus thummi piger (Midge).